The following is a 353-amino-acid chain: MLFTLIVCLTIISSLATFLLLFGDSPSFRNTPIQKLRNSLLSISRDIFQFYHWLDEKLNGQLLKILNWLVPVGYVMVVTVCFQQFLTHTLPMLSSPGLFRLFTIYFSMVLIYASTILAAFSDPGRITTINLKSYPYTPNQLIFFDGKTCSTCHIAKPARSKHCSVCNQCFLLYDHHCVWINNCVGYYNYKWFMLFLISNINMLGYGGWLCYWALTPVSWRKITSTNNANKVTGIFLILCSIFIVITTLFTFLHLRYIYLGVTTNELDKWSEIDHLVGLGVLYQIEPSIANENYVERAILDGNAVYISLKDERILIYNSNVKNFKLQLIQSVEDDLVNIYDHGFWNNLIERLKW.

A topological domain (lumenal) is located at residue M1. A helical membrane pass occupies residues 2-22 (LFTLIVCLTIISSLATFLLLF). Over 23–61 (GDSPSFRNTPIQKLRNSLLSISRDIFQFYHWLDEKLNGQ) the chain is Cytoplasmic. Residues 62–82 (LLKILNWLVPVGYVMVVTVCF) traverse the membrane as a helical segment. At 83–100 (QQFLTHTLPMLSSPGLFR) the chain is on the lumenal side. Residues 101–121 (LFTIYFSMVLIYASTILAAFS) form a helical membrane-spanning segment. The Cytoplasmic portion of the chain corresponds to 122–190 (DPGRITTINL…NNCVGYYNYK (69 aa)). The DHHC domain maps to 147-197 (KTCSTCHIAKPARSKHCSVCNQCFLLYDHHCVWINNCVGYYNYKWFMLFLI). Catalysis depends on C177, which acts as the S-palmitoyl cysteine intermediate. The helical transmembrane segment at 191 to 211 (WFMLFLISNINMLGYGGWLCY) threads the bilayer. Topologically, residues 212 to 233 (WALTPVSWRKITSTNNANKVTG) are lumenal. Residues 234-254 (IFLILCSIFIVITTLFTFLHL) traverse the membrane as a helical segment. The Cytoplasmic segment spans residues 255–353 (RYIYLGVTTN…WNNLIERLKW (99 aa)).

Belongs to the DHHC palmitoyltransferase family. SWF1 subfamily.

The protein resides in the endoplasmic reticulum membrane. The enzyme catalyses L-cysteinyl-[protein] + hexadecanoyl-CoA = S-hexadecanoyl-L-cysteinyl-[protein] + CoA. Palmitoyltransferase that targets several endosomal SNAREs. Palmitoylates the SNAREs at cysteine residues close to the cytoplasmic end of their transmembrane domain. May have a role in the cellular quality control of transmembrane domain-containing proteins. The chain is Palmitoyltransferase SWF1 (SWF1) from Candida albicans (strain SC5314 / ATCC MYA-2876) (Yeast).